Consider the following 348-residue polypeptide: Tocopherol O-methyltransferase, chloroplastic (348 aa).

The transit peptide at 1-51 directs the protein to the chloroplast; the sequence is MKATLAAPSSLTSLPYRTNSSFGSKSSLLFRSPSSSSSVSMTTTRGNVAVA. Ala-52 carries the N-acetylalanine modification. The SAM motif I stretch occupies residues 130–139; it reads VVDVGCGIGG. An SAM motif II region spans residues 193 to 201; that stretch reads GKFDLVWSM. The SAM motif III stretch occupies residues 220–229; it reads VAAPGGRIII.

It belongs to the class I-like SAM-binding methyltransferase superfamily. gTMT family.

It localises to the plastid. Its subcellular location is the chloroplast. It catalyses the reaction gamma-tocopherol + S-adenosyl-L-methionine = (+)-alpha-tocopherol + S-adenosyl-L-homocysteine + H(+). It carries out the reaction delta-tocotrienol + S-adenosyl-L-methionine = beta-tocotrienol + S-adenosyl-L-homocysteine + H(+). The catalysed reaction is gamma-tocotrienol + S-adenosyl-L-methionine = alpha-tocotrienol + S-adenosyl-L-homocysteine + H(+). The enzyme catalyses delta-tocopherol + S-adenosyl-L-methionine = beta-tocopherol + S-adenosyl-L-homocysteine + H(+). Its pathway is cofactor biosynthesis; tocopherol biosynthesis. Involved in the synthesis of tocopherol (vitamin E). Methylates gamma- and delta-tocopherol to form beta- and alpha-tocopherol, respectively. The polypeptide is Tocopherol O-methyltransferase, chloroplastic (VTE4) (Arabidopsis thaliana (Mouse-ear cress)).